The chain runs to 1375 residues: DNA-directed RNA polymerase subunit beta' (1375 aa).

Zn(2+)-binding residues include C70, C72, C85, and C88. Mg(2+)-binding residues include D460, D462, and D464. Residues C800, C874, C881, and C884 each coordinate Zn(2+).

Belongs to the RNA polymerase beta' chain family. As to quaternary structure, the RNAP catalytic core consists of 2 alpha, 1 beta, 1 beta' and 1 omega subunit. When a sigma factor is associated with the core the holoenzyme is formed, which can initiate transcription. The cofactor is Mg(2+). Requires Zn(2+) as cofactor.

It carries out the reaction RNA(n) + a ribonucleoside 5'-triphosphate = RNA(n+1) + diphosphate. DNA-dependent RNA polymerase catalyzes the transcription of DNA into RNA using the four ribonucleoside triphosphates as substrates. This Bdellovibrio bacteriovorus (strain ATCC 15356 / DSM 50701 / NCIMB 9529 / HD100) protein is DNA-directed RNA polymerase subunit beta'.